We begin with the raw amino-acid sequence, 328 residues long: MYNLRNRSFLNLLDFTSKDIKYLLDLSIDLKKSKYAGIEVQKLKGKNIVIIFEKDSTRTRCAFEIAAYDQGANITYLGPKGNQIGVKESMKDTARVLGRMYDAIGFRGFSQETVECLANYSNVPVYNGLTDISHPTQILADLMTIKEHKGSLKGIKIVFCGDGRGNIANSLLKGCAIMGLDFRIFAPKELFPDSNLTLKAKSLALKSGGKITITDSKEEAVKCADVVYTDVWVSMGEESNWEDRINLLKLYQVNKELMCMAKDDAIFMHCLPAFHDLSTVVGRDIFDKYGLDGIEVTEEIFESKNSVVFDVAENRVHAIKAVMVSTLG.

Carbamoyl phosphate is bound by residues 56 to 59 (STRT), Q83, R107, and 134 to 137 (HPTQ). Residues N166, D230, and 234-235 (SM) each bind L-ornithine. Carbamoyl phosphate contacts are provided by residues 270–271 (CL) and R315.

Belongs to the aspartate/ornithine carbamoyltransferase superfamily. OTCase family.

It is found in the cytoplasm. It carries out the reaction carbamoyl phosphate + L-ornithine = L-citrulline + phosphate + H(+). It participates in amino-acid degradation; L-arginine degradation via ADI pathway; carbamoyl phosphate from L-arginine: step 2/2. Functionally, reversibly catalyzes the transfer of the carbamoyl group from carbamoyl phosphate (CP) to the N(epsilon) atom of ornithine (ORN) to produce L-citrulline. In Borreliella afzelii (Borrelia afzelii), this protein is Ornithine carbamoyltransferase, catabolic (arcB).